We begin with the raw amino-acid sequence, 170 residues long: MELKLTDLAFTALPNGKVLPPGILSSSSNCKKCGLRCDNGLPYCFNCQFKCQVCGSYDNLLIKNNSTETLCKYVNPKDHVYKFATNRSAYKMKYKLCSKCKDYVLCAMCLTFNQNAFAKEIWSYEEPLFVMEICKKCMHKHTCDECNTPSSSNIKIFLDGYIYCNKCDEE.

This Acheta domesticus (House cricket) protein is Cysteine-rich uncharacterized protein 241L.